We begin with the raw amino-acid sequence, 397 residues long: uncharacterized protein (397 aa).

Serine 115 and serine 141 each carry phosphoserine. Residues 135–156 (NSLNHDSPPHTPARRSDNSTSK) are disordered. A Glycyl lysine isopeptide (Lys-Gly) (interchain with G-Cter in SUMO2) cross-link involves residue lysine 239. Serine 269 and serine 296 each carry phosphoserine. The interval 289 to 316 (GRGPTKASPQPALTVKAKATSSATTLAS) is disordered. Low complexity predominate over residues 300–316 (ALTVKAKATSSATTLAS). Serine 342 is modified (phosphoserine). Positions 354–397 (SEAQDSQVTSTKSPTVRCIVPDPPAPLASQRPPRRRWRRTCKDC) are disordered. Residues 356 to 367 (AQDSQVTSTKSP) are compositionally biased toward polar residues. Basic residues predominate over residues 385 to 397 (PPRRRWRRTCKDC).

This is an uncharacterized protein from Rattus norvegicus (Rat).